The sequence spans 222 residues: RNA-binding protein KhpB (222 aa).

Residues 2–51 (DMVTVTAKTVEEAVTKALIELQTTSDKLTYEIVEKGSAGFLGIGSKPAII) form a jag_N domain region. Positions 54-133 (KRKETLQDKA…KSSSDYIRVK (80 aa)) constitute a KH domain. The 67-residue stretch at 138–204 (NYRERRKETL…EEPFRHVIIS (67 aa)) folds into the R3H domain.

This sequence belongs to the KhpB RNA-binding protein family. Forms a complex with KhpA. Homodimer or homotrimer.

The protein localises to the cytoplasm. Its function is as follows. A probable RNA chaperone. Forms a complex with KhpA which binds to cellular RNA and controls its expression. Plays a role in peptidoglycan (PG) homeostasis and cell length regulation. The polypeptide is RNA-binding protein KhpB (Clostridium symbiosum (Bacteroides symbiosus)).